The following is a 769-amino-acid chain: Neutral alpha-glucosidase C (769 aa).

The active-site Nucleophile is Asp-366. Glu-369 is an active-site residue. The Proton donor role is filled by Asp-442.

Belongs to the glycosyl hydrolase 31 family.

The catalysed reaction is Hydrolysis of terminal, non-reducing (1-&gt;4)-linked alpha-D-glucose residues with release of alpha-D-glucose.. Its function is as follows. Has alpha-glucosidase activity. The protein is Neutral alpha-glucosidase C (GANC) of Macaca fascicularis (Crab-eating macaque).